The sequence spans 396 residues: Stearoyl-[acyl-carrier-protein] 9-desaturase 5, chloroplastic (396 aa).

Residues 1 to 29 (MAMAMDRIVFSPSSYVYRPCQARGSRSSR) constitute a chloroplast transit peptide. Positions 137, 175, 178, 228, 261, and 264 each coordinate Fe cation.

It belongs to the fatty acid desaturase type 2 family. Homodimer. Requires Fe(2+) as cofactor. Ubiquitously expressed with a preference in leaves, flowers and stems.

The protein localises to the plastid. It localises to the chloroplast stroma. It catalyses the reaction octadecanoyl-[ACP] + 2 reduced [2Fe-2S]-[ferredoxin] + O2 + 2 H(+) = (9Z)-octadecenoyl-[ACP] + 2 oxidized [2Fe-2S]-[ferredoxin] + 2 H2O. It participates in lipid metabolism; fatty acid metabolism. Converts stearoyl-ACP to oleoyl-ACP by introduction of a cis double bond between carbons 9 and 10 of the acyl chain. This is Stearoyl-[acyl-carrier-protein] 9-desaturase 5, chloroplastic (S-ACP-DES5) from Arabidopsis thaliana (Mouse-ear cress).